We begin with the raw amino-acid sequence, 215 residues long: Adenylate kinase (215 aa).

G10–T15 provides a ligand contact to ATP. Residues S30–V59 form an NMP region. AMP-binding positions include T31, R36, G57–V59, G85–R88, and Q92. The LID stretch occupies residues G122 to D159. ATP contacts are provided by residues R123 and I132 to Y133. R156 and R167 together coordinate AMP. G201 contributes to the ATP binding site.

It belongs to the adenylate kinase family. In terms of assembly, monomer.

It localises to the cytoplasm. It carries out the reaction AMP + ATP = 2 ADP. It participates in purine metabolism; AMP biosynthesis via salvage pathway; AMP from ADP: step 1/1. Catalyzes the reversible transfer of the terminal phosphate group between ATP and AMP. Plays an important role in cellular energy homeostasis and in adenine nucleotide metabolism. The polypeptide is Adenylate kinase (Pseudomonas savastanoi pv. phaseolicola (strain 1448A / Race 6) (Pseudomonas syringae pv. phaseolicola (strain 1448A / Race 6))).